Consider the following 291-residue polypeptide: MFKELALIGTTASGKSDLAFELAKEFEGVILSLDSLALYKEIDIASAKPKSWQLEAVRHFGVDEIYPDEEFSVGAFFEIYKNAKEIARLRGCPLIITGGSGFYLKAMLSGLAPDVPKCELNLSNEEIYELALQNDPEFAGKFSQNDSYRLEKWYQIYKFSGQIPSIWLRENTKPSVIKELAIFEILWDKDELRARIAKRTKNMLDEGLIDEAKFLFEKYKSEPKPLKSIGLKECKQFLEGEISKNELETLIATHTAQLAKRQRTFNRSQFEKKFVGDLAQTRSEILKFLKG.

Residue 9–16 (GTTASGKS) participates in ATP binding. Residue 11-16 (TASGKS) participates in substrate binding. Residues 34 to 37 (DSLA) form an interaction with substrate tRNA region.

This sequence belongs to the IPP transferase family. Monomer. Requires Mg(2+) as cofactor.

It catalyses the reaction adenosine(37) in tRNA + dimethylallyl diphosphate = N(6)-dimethylallyladenosine(37) in tRNA + diphosphate. Catalyzes the transfer of a dimethylallyl group onto the adenine at position 37 in tRNAs that read codons beginning with uridine, leading to the formation of N6-(dimethylallyl)adenosine (i(6)A). In Campylobacter concisus (strain 13826), this protein is tRNA dimethylallyltransferase.